Here is a 63-residue protein sequence, read N- to C-terminus: MPPNLTGYWRFVSQDNMDNYLRALDLNVALRKLVXLLKFDKEIVHEGNHMTIRTLXTXRNYXI.

It belongs to the calycin superfamily. Fatty-acid binding protein (FABP) family.

Its function is as follows. Binds vitamin A2 in the eye lens and thus functions as a UV filter. Intracellular transport of retinol. This Gonatodes vittatus (Wiegmann's striped gecko) protein is Iota-crystallin (CRBPI).